Reading from the N-terminus, the 1040-residue chain is Multidrug resistance protein MdtB (1040 aa).

11 consecutive transmembrane segments (helical) span residues 15–37, 343–365, 369–391, 398–420, 440–462, 474–496, 535–557, 867–889, 909–931, 968–990, and 1000–1022; these read LFIL…GIIG, VQFE…LRNA, LIPS…FLGF, LMAL…ENIA, IGFT…LFMG, VTLA…MMCA, HPWL…YIWI, VWLI…ESFI, LMMA…IGIV, ILMT…GVGA, and MVGG…YLLF.

The protein belongs to the resistance-nodulation-cell division (RND) (TC 2.A.6) family. MdtB subfamily. In terms of assembly, part of a tripartite efflux system composed of MdtA, MdtB and MdtC. MdtB forms a heteromultimer with MdtC.

It is found in the cell inner membrane. The sequence is that of Multidrug resistance protein MdtB from Pectobacterium atrosepticum (strain SCRI 1043 / ATCC BAA-672) (Erwinia carotovora subsp. atroseptica).